A 347-amino-acid polypeptide reads, in one-letter code: MNPMILLMLLITILSGTSIVMMSSHWFLTWLGFEMNMMAMIPVLMKKYNPRAMEAATKYFLTQATASMILVLGIIINLIHSGQWTIMAMESYSASTLLTIALVMKLGLAPFHFWVPEVTQGVSLNSGLILLTWQKIAPLSLLYQIYSSVNTNILLVMSLLSIMVGGWGGLNQTQLRKIMAYSSIAHMGWMIMIMIYNPNLSLLNLLIYILMTSSMFMLLMFNSTISTLALSRTWNINPIITTTILIILLSLGGLPPLSGFMPKWMIIQELTKNDSVILPAVMAILALLNLFFYMRLAYSSSLTMFPTTNNTKMVWQFQPMNVSFMMTSLISISIMALPLTPLAMILY.

Transmembrane regions (helical) follow at residues 3–23, 25–45, 59–79, 96–116, 122–142, 149–169, 178–198, 201–221, 239–259, 274–294, and 326–346; these read PMILLMLLITILSGTSIVMMS, HWFLTWLGFEMNMMAMIPVLM, YFLTQATASMILVLGIIINLI, TLLTIALVMKLGLAPFHFWVP, VSLNSGLILLTWQKIAPLSLL, VNTNILLVMSLLSIMVGGWGG, IMAYSSIAHMGWMIMIMIYNP, SLLNLLIYILMTSSMFMLLMF, IITTTILIILLSLGGLPPLSG, DSVILPAVMAILALLNLFFYM, and MTSLISISIMALPLTPLAMIL.

Belongs to the complex I subunit 2 family. As to quaternary structure, core subunit of respiratory chain NADH dehydrogenase (Complex I) which is composed of 45 different subunits. Interacts with TMEM242.

The protein localises to the mitochondrion inner membrane. It carries out the reaction a ubiquinone + NADH + 5 H(+)(in) = a ubiquinol + NAD(+) + 4 H(+)(out). Core subunit of the mitochondrial membrane respiratory chain NADH dehydrogenase (Complex I) which catalyzes electron transfer from NADH through the respiratory chain, using ubiquinone as an electron acceptor. Essential for the catalytic activity and assembly of complex I. The polypeptide is NADH-ubiquinone oxidoreductase chain 2 (Sylvisorex johnstoni (Johnston's forest shrew)).